The sequence spans 255 residues: Adenosylcobinamide-GDP ribazoletransferase (255 aa).

6 consecutive transmembrane segments (helical) span residues 24–44 (LIAYVPLVALFDAALAASLYV), 45–65 (AIYGISKLLASFISVSAIYIV), 98–118 (VGAGGVFTLIFVYLLALISLS), 122–142 (LYIGIFSIILAEFLSKSMMMI), 164–184 (KHDSLYTVEFVVIPIVLALLS), and 187–207 (SIMISVALAFLIFIIVKMAVI).

Belongs to the CobS family. Mg(2+) is required as a cofactor.

The protein resides in the cell membrane. It carries out the reaction alpha-ribazole + adenosylcob(III)inamide-GDP = adenosylcob(III)alamin + GMP + H(+). The catalysed reaction is alpha-ribazole 5'-phosphate + adenosylcob(III)inamide-GDP = adenosylcob(III)alamin 5'-phosphate + GMP + H(+). It participates in cofactor biosynthesis; adenosylcobalamin biosynthesis; adenosylcobalamin from cob(II)yrinate a,c-diamide: step 7/7. In terms of biological role, joins adenosylcobinamide-GDP and alpha-ribazole to generate adenosylcobalamin (Ado-cobalamin). Also synthesizes adenosylcobalamin 5'-phosphate from adenosylcobinamide-GDP and alpha-ribazole 5'-phosphate. This chain is Adenosylcobinamide-GDP ribazoletransferase, found in Thermoplasma acidophilum (strain ATCC 25905 / DSM 1728 / JCM 9062 / NBRC 15155 / AMRC-C165).